Reading from the N-terminus, the 401-residue chain is NADH-ubiquinone oxidoreductase 49 kDa subunit (401 aa).

Belongs to the complex I 49 kDa subunit family.

It localises to the mitochondrion. The enzyme catalyses a ubiquinone + NADH + 5 H(+)(in) = a ubiquinol + NAD(+) + 4 H(+)(out). Core subunit of the mitochondrial membrane respiratory chain NADH dehydrogenase (Complex I) that is believed to belong to the minimal assembly required for catalysis. Complex I functions in the transfer of electrons from NADH to the respiratory chain. The immediate electron acceptor for the enzyme is believed to be ubiquinone. Component of the iron-sulfur (IP) fragment of the enzyme. This is NADH-ubiquinone oxidoreductase 49 kDa subunit (NAD7) from Acanthamoeba castellanii (Amoeba).